The primary structure comprises 156 residues: Small ribosomal subunit protein uS7 (156 aa).

Belongs to the universal ribosomal protein uS7 family. As to quaternary structure, part of the 30S ribosomal subunit. Contacts proteins S9 and S11.

In terms of biological role, one of the primary rRNA binding proteins, it binds directly to 16S rRNA where it nucleates assembly of the head domain of the 30S subunit. Is located at the subunit interface close to the decoding center, probably blocks exit of the E-site tRNA. This Nitratidesulfovibrio vulgaris (strain ATCC 29579 / DSM 644 / CCUG 34227 / NCIMB 8303 / VKM B-1760 / Hildenborough) (Desulfovibrio vulgaris) protein is Small ribosomal subunit protein uS7.